The following is a 322-amino-acid chain: Arginase (322 aa).

His-113, Asp-141, His-143, and Asp-145 together coordinate Mn(2+). Substrate is bound by residues 143–147, 154–156, and Asp-200; these read HADIN and SGN. Positions 247 and 249 each coordinate Mn(2+). Positions 261 and 292 each coordinate substrate.

Belongs to the arginase family. As to quaternary structure, homotrimer. Mn(2+) is required as a cofactor.

It carries out the reaction L-arginine + H2O = urea + L-ornithine. It functions in the pathway nitrogen metabolism; urea cycle; L-ornithine and urea from L-arginine: step 1/1. This Coccidioides posadasii (strain C735) (Valley fever fungus) protein is Arginase (ARG).